Consider the following 270-residue polypeptide: Phosphonates import ATP-binding protein PhnC 1 (270 aa).

The ABC transporter domain occupies 2–245; it reads LVVEGLTCRF…IARELYDLEA (244 aa). Residue 34 to 41 participates in ATP binding; the sequence is GRSGAGKS.

The protein belongs to the ABC transporter superfamily. Phosphonates importer (TC 3.A.1.9.1) family. As to quaternary structure, the complex is composed of two ATP-binding proteins (PhnC), two transmembrane proteins (PhnE) and a solute-binding protein (PhnD).

The protein localises to the cell inner membrane. The catalysed reaction is phosphonate(out) + ATP + H2O = phosphonate(in) + ADP + phosphate + H(+). Part of the ABC transporter complex PhnCDE involved in phosphonates import. Responsible for energy coupling to the transport system. In Rhodopseudomonas palustris (strain ATCC BAA-98 / CGA009), this protein is Phosphonates import ATP-binding protein PhnC 1.